Consider the following 320-residue polypeptide: o-succinylbenzoate synthase (320 aa).

K133 acts as the Proton donor in catalysis. Mg(2+) is bound by residues D161, E190, and D213. K235 (proton acceptor) is an active-site residue.

It belongs to the mandelate racemase/muconate lactonizing enzyme family. MenC type 1 subfamily. Requires a divalent metal cation as cofactor.

It carries out the reaction (1R,6R)-6-hydroxy-2-succinyl-cyclohexa-2,4-diene-1-carboxylate = 2-succinylbenzoate + H2O. Its pathway is quinol/quinone metabolism; 1,4-dihydroxy-2-naphthoate biosynthesis; 1,4-dihydroxy-2-naphthoate from chorismate: step 4/7. The protein operates within quinol/quinone metabolism; menaquinone biosynthesis. Functionally, converts 2-succinyl-6-hydroxy-2,4-cyclohexadiene-1-carboxylate (SHCHC) to 2-succinylbenzoate (OSB). This Escherichia coli O7:K1 (strain IAI39 / ExPEC) protein is o-succinylbenzoate synthase.